Here is a 367-residue protein sequence, read N- to C-terminus: B2 bradykinin receptor (367 aa).

Residues 1–36 (MLNITSQVLAPALNGSVSQSSGCPNTEWSGWLNVIQ) lie on the Extracellular side of the membrane. N-linked (GlcNAc...) asparagine glycosylation is found at Asn-3 and Asn-14. Residues 37-60 (APFLWVLFVLATLENLFVLSVFCL) traverse the membrane as a helical segment. Topologically, residues 61–69 (HKSSCTVAE) are cytoplasmic. The helical transmembrane segment at 70 to 94 (VYLGNLAAADLILACGLPFWAVTIA) threads the bilayer. Topologically, residues 95-107 (NHFDWLFGEALCR) are extracellular. An intrachain disulfide couples Cys-106 to Cys-187. A helical membrane pass occupies residues 108–129 (VVNTMIYMNLYSSICFLMLVSI). The Cytoplasmic portion of the chain corresponds to 130 to 151 (DRYLALVKTMSIGRMRRVRWAK). Residue Tyr-132 is modified to Phosphotyrosine. Residues 152–174 (LYSLVIWGCTLLLSSPMLVFRTM) form a helical membrane-spanning segment. Over 175 to 197 (KDYRDEGYNVTACIIDYPSRSWE) the chain is Extracellular. N-linked (GlcNAc...) asparagine glycosylation occurs at Asn-183. Residues 198 to 224 (VFTNVLLNLVGFLLPLSVITFCTVQIL) traverse the membrane as a helical segment. The Cytoplasmic portion of the chain corresponds to 225–243 (QVLRNNEMQKFKEIQTERR). The chain crosses the membrane as a helical span at residues 244 to 268 (ATVLVLAVLLLFVVCWLPFQVSTFL). Residues 269 to 287 (DTLLKLGVLSSCWDEHVID) are Extracellular-facing. The helical transmembrane segment at 288 to 311 (VITQVGSFMGYSNSCLNPLVYVIV) threads the bilayer. The Cytoplasmic segment spans residues 312–367 (GKRFRKKSREVYRAACPKAGCVLEPVQAESSMGTLRTSISVERQIHKLPEWTRSSQ). Residue Tyr-323 is modified to Phosphotyrosine. Cys-327 carries the S-palmitoyl cysteine lipid modification. Ser-342 carries the post-translational modification Phosphoserine. Thr-345 is subject to Phosphothreonine. A phosphoserine; by GRK6 mark is found at Ser-349 and Ser-351.

The protein belongs to the G-protein coupled receptor 1 family. Bradykinin receptor subfamily. BDKRB2 sub-subfamily. As to quaternary structure, forms a complex with PECAM1 and GNAQ. Interacts with PECAM1.

It is found in the cell membrane. Its function is as follows. Receptor for bradykinin. It is associated with G proteins that activate a phosphatidylinositol-calcium second messenger system. The polypeptide is B2 bradykinin receptor (BDKRB2) (Oryctolagus cuniculus (Rabbit)).